We begin with the raw amino-acid sequence, 566 residues long: Oxygen-dependent choline dehydrogenase (566 aa).

7–36 lines the FAD pocket; sequence DYIICGAGSAGNVLATRLTEDPDVTVLLLE. Positions 180-202 are disordered; the sequence is NGYQQEGFGPMDRTVTPKGRRAS. Catalysis depends on His-474, which acts as the Proton acceptor.

This sequence belongs to the GMC oxidoreductase family. FAD serves as cofactor.

The enzyme catalyses choline + A = betaine aldehyde + AH2. The catalysed reaction is betaine aldehyde + NAD(+) + H2O = glycine betaine + NADH + 2 H(+). Its pathway is amine and polyamine biosynthesis; betaine biosynthesis via choline pathway; betaine aldehyde from choline (cytochrome c reductase route): step 1/1. Its function is as follows. Involved in the biosynthesis of the osmoprotectant glycine betaine. Catalyzes the oxidation of choline to betaine aldehyde and betaine aldehyde to glycine betaine at the same rate. The protein is Oxygen-dependent choline dehydrogenase of Burkholderia cenocepacia (strain HI2424).